The following is a 757-amino-acid chain: Relaxin receptor 1 (757 aa).

The Extracellular segment spans residues 1–408 (MTSGSVFFYI…LENLLASIIQ (408 aa)). The 38-residue stretch at 26–63 (KCSLGYFPCGNITKCLPQLLHCNGVDDCGNQADEDNCG) folds into the LDL-receptor class A domain. 3 disulfide bridges follow: cysteine 27–cysteine 40, cysteine 34–cysteine 53, and cysteine 47–cysteine 62. Asparagine 36 is a glycosylation site (N-linked (GlcNAc...) asparagine). Ca(2+)-binding residues include leucine 45, asparagine 48, valine 50, aspartate 52, aspartate 58, and glutamate 59. In terms of domain architecture, LRRNT spans 91–127 (ETPECLVGSVPVQCLCRGLELDCDETNLRAVPSVSSN). N-linked (GlcNAc...) asparagine glycosylation occurs at asparagine 127. LRR repeat units follow at residues 151–172 (DLQK…AFRG), 175–196 (SLTK…VFED), 199–220 (RLEW…TFYG), 223–244 (SLIL…PLCQ), 248–269 (RLHW…TLIS), 272–293 (NLTV…TFAP), 296–317 (KLDE…IFKD), 320–341 (ELSQ…QFDY), and 344–365 (KLKS…MFRP). N-linked (GlcNAc...) asparagine glycosylation is found at asparagine 264 and asparagine 272. The N-linked (GlcNAc...) asparagine glycan is linked to asparagine 325. N-linked (GlcNAc...) asparagine glycosylation is present at asparagine 368. Residues 409 to 429 (RVFVWVVSAVTCFGNVFVICM) form a helical membrane-spanning segment. Over 430 to 443 (RPYIRSENKLYAMS) the chain is Cytoplasmic. Residues 444 to 464 (IISLCCADCLMGIYLFVIGGF) form a helical membrane-spanning segment. Over 465–486 (DLKFRGEYNKHAQLWMESTHCQ) the chain is Extracellular. Cysteine 485 and cysteine 563 are disulfide-bonded. A helical membrane pass occupies residues 487–507 (LVGSLAILSTEVSVLLLTFLT). Residues 508–527 (LEKYICIVYPFRCVRPGKCR) are Cytoplasmic-facing. A helical membrane pass occupies residues 528–548 (TITVLILIWITGFIVAFIPLS). Topologically, residues 549-577 (NKEFFKNYYGTNGVCFPLHSEDTESIGAQ) are extracellular. A helical transmembrane segment spans residues 578–598 (VYSVAIFLGINLAAFIIIVFS). Residues 599–629 (YGSMFYSVHQSAITATEIRNQVKKEMILAKR) are Cytoplasmic-facing. A helical transmembrane segment spans residues 630-650 (FFFIVFTDALCWIPIFVVKFL). The Extracellular segment spans residues 651–660 (SLLQVEIPGT). The helical transmembrane segment at 661 to 681 (ITSWVVIFILPINSALNPILY) threads the bilayer. Residues 682 to 757 (TLTTRPFKEM…SQSTRLNSYS (76 aa)) lie on the Cytoplasmic side of the membrane.

It belongs to the G-protein coupled receptor 1 family. As to quaternary structure, interacts with C1QTNF8.

The protein localises to the cell membrane. Its function is as follows. Receptor for relaxins. The activity of this receptor is mediated by G proteins leading to stimulation of adenylate cyclase and an increase of cAMP. Binding of the ligand may also activate a tyrosine kinase pathway that inhibits the activity of a phosphodiesterase that degrades cAMP. The protein is Relaxin receptor 1 (RXFP1) of Pongo abelii (Sumatran orangutan).